Here is a 408-residue protein sequence, read N- to C-terminus: Triose phosphate/phosphate translocator, chloroplastic (408 aa).

The N-terminal 82 residues, 1–82 (MESRVLSSGA…VKRDVLKPCT (82 aa)), are a transit peptide targeting the chloroplast. Residues 83 to 102 (ATASDSAGDAAPVGFFAKYP) lie on the Chloroplast intermembrane side of the membrane. A helical transmembrane segment spans residues 103-123 (FLVTGFFFFMWYFLNVIFNIL). The Lumenal segment spans residues 124-135 (NKKIYNYFPYPY). A helical transmembrane segment spans residues 136–156 (FVSAIHLAVGVVYCLGGWAVG). The Chloroplast intermembrane portion of the chain corresponds to 157 to 213 (LPKRAPMDSNLLKLLIPVAFCHALGHVTSNVSFAAVAVSFTHTIKSLEPFFNAAASQ). The chain crosses the membrane as a helical span at residues 214–234 (FILGQSIPITLWLSLAPVVIG). Residues 235-278 (VSMASLTELSFNWLGFISAMISNISFTYRSIYSKKAMTDMDSTN) are Lumenal-facing. A helical membrane pass occupies residues 279-298 (LYAYISIISLLFCIPPAIIL). At 299 to 376 (EGPQLLKHGF…IVFGNKISTQ (78 aa)) the chain is on the chloroplast intermembrane side. A helical membrane pass occupies residues 377 to 397 (TAIGTSIAIAGVAVYSLIKAK). Topologically, residues 398 to 408 (IEEEKRGLKSA) are lumenal.

This sequence belongs to the TPT transporter family. TPT (TC 2.A.7.9) subfamily. In terms of assembly, homodimer.

The protein resides in the plastid. Its subcellular location is the chloroplast membrane. Mediates the export of fixed carbons from the chloroplasts into the cytosol in the form of triose phosphates. This chain is Triose phosphate/phosphate translocator, chloroplastic (TPT), found in Flaveria pringlei.